We begin with the raw amino-acid sequence, 446 residues long: Exodeoxyribonuclease 7 large subunit (446 aa).

This sequence belongs to the XseA family. In terms of assembly, heterooligomer composed of large and small subunits.

Its subcellular location is the cytoplasm. It carries out the reaction Exonucleolytic cleavage in either 5'- to 3'- or 3'- to 5'-direction to yield nucleoside 5'-phosphates.. Bidirectionally degrades single-stranded DNA into large acid-insoluble oligonucleotides, which are then degraded further into small acid-soluble oligonucleotides. In Streptococcus pneumoniae serotype 19F (strain G54), this protein is Exodeoxyribonuclease 7 large subunit.